The sequence spans 2752 residues: Protein PFF0380w (2752 aa).

Over residues 20-30 (EREKEEEEKKR) the composition is skewed to basic and acidic residues. 5 disordered regions span residues 20-44 (EREK…NNYN), 139-160 (HIHK…NNDY), 634-678 (NDIV…INMK), 1048-1130 (DKKS…SGEN), and 1153-1172 (ENLQ…NNNG). The segment covering 32 to 44 (YNISNNNNNNNYN) has biased composition (low complexity). Basic and acidic residues predominate over residues 142-157 (KNNDINNIHEKNDKSN). Over residues 640 to 674 (NNNNNNNNNNNNNNNNNNNNNNNNNNNNNNNNNNN) the composition is skewed to low complexity. The span at 1048-1060 (DKKSEDMKEDTPT) shows a compositional bias: basic and acidic residues. Positions 1061–1075 (RGENLQRGQNLQRGD) are enriched in polar residues. Residues 1076-1090 (NLQRGDNLQRGDNLQ) are compositionally biased toward basic and acidic residues. Residues 1091 to 1130 (RGDNLQNGDNLQNGDNLQRGDNLQNGENLQSGENLQSGEN) are compositionally biased toward polar residues. The segment covering 1162-1172 (NNILYPYNNNG) has biased composition (low complexity). Residues 1277–1354 (TLEEVLEIIS…LHRTHIQHKK (78 aa)) form the HTH OST-type domain. Disordered regions lie at residues 1457 to 1499 (DIKQ…NNIS), 1958 to 1999 (AKNS…YYML), 2063 to 2099 (KRKN…NNDK), and 2501 to 2537 (DENN…FLHN). Composition is skewed to low complexity over residues 1469-1499 (NNIN…NNIS) and 1962-1975 (NQEN…NYNN). Positions 1976–1994 (NDDDDDNNNNNNDDDDDDN) are enriched in acidic residues. Composition is skewed to low complexity over residues 2068–2095 (NIHN…NNDN) and 2501–2526 (DENN…VLHN).

This chain is Protein PFF0380w, found in Plasmodium falciparum (isolate 3D7).